Here is a 181-residue protein sequence, read N- to C-terminus: Large ribosomal subunit protein uL5 (181 aa).

It belongs to the universal ribosomal protein uL5 family. As to quaternary structure, part of the 50S ribosomal subunit; part of the 5S rRNA/L5/L18/L25 subcomplex. Contacts the 5S rRNA and the P site tRNA. Forms a bridge to the 30S subunit in the 70S ribosome.

Functionally, this is one of the proteins that bind and probably mediate the attachment of the 5S RNA into the large ribosomal subunit, where it forms part of the central protuberance. In the 70S ribosome it contacts protein S13 of the 30S subunit (bridge B1b), connecting the 2 subunits; this bridge is implicated in subunit movement. Contacts the P site tRNA; the 5S rRNA and some of its associated proteins might help stabilize positioning of ribosome-bound tRNAs. The chain is Large ribosomal subunit protein uL5 from Rickettsia canadensis (strain McKiel).